Reading from the N-terminus, the 723-residue chain is Catalase-peroxidase (723 aa).

Positions 97 to 225 (WHAAGSYRVT…LAAVQMGLIY (129 aa)) form a cross-link, tryptophyl-tyrosyl-methioninium (Trp-Tyr) (with M-251). The active-site Proton acceptor is the His-98. The segment at residues 225–251 (YVNPEGVNGKSDPLATAAQMRETFARM) is a cross-link (tryptophyl-tyrosyl-methioninium (Tyr-Met) (with W-97)). His-266 is a heme b binding site.

This sequence belongs to the peroxidase family. Peroxidase/catalase subfamily. Homodimer or homotetramer. Heme b is required as a cofactor. In terms of processing, formation of the three residue Trp-Tyr-Met cross-link is important for the catalase, but not the peroxidase activity of the enzyme.

The catalysed reaction is H2O2 + AH2 = A + 2 H2O. It carries out the reaction 2 H2O2 = O2 + 2 H2O. Functionally, bifunctional enzyme with both catalase and broad-spectrum peroxidase activity. Involved in tumorigenesis. The sequence is that of Catalase-peroxidase from Rhizobium radiobacter (Agrobacterium tumefaciens).